Consider the following 147-residue polypeptide: Small ribosomal subunit protein uS12 (147 aa).

Belongs to the universal ribosomal protein uS12 family. As to quaternary structure, part of the 30S ribosomal subunit.

With S4 and S5 plays an important role in translational accuracy. Located at the interface of the 30S and 50S subunits. The sequence is that of Small ribosomal subunit protein uS12 from Thermococcus celer.